Here is a 421-residue protein sequence, read N- to C-terminus: L-Ala-D/L-amino acid epimerase (421 aa).

Substrate-binding positions include T193 and 218–220 (KLK). Mg(2+) contacts are provided by D247, E275, and D304. Residues K328 and 380–382 (DLD) each bind substrate.

It belongs to the mandelate racemase/muconate lactonizing enzyme family. The cofactor is Mg(2+).

Functionally, catalyzes the epimerization of various hydrophobic and polar dipeptides. Has epimerase activity with L-Ala-L-Ala, L-Ala-L-Ser, L-Ala-L-Thr and L-Ala-L-Trp (in vitro). The polypeptide is L-Ala-D/L-amino acid epimerase (Populus trichocarpa (Western balsam poplar)).